The following is a 211-amino-acid chain: Nucleoside triphosphate pyrophosphatase (211 aa).

Asp75 acts as the Proton acceptor in catalysis.

This sequence belongs to the Maf family. A divalent metal cation is required as a cofactor.

The protein localises to the cytoplasm. The catalysed reaction is a ribonucleoside 5'-triphosphate + H2O = a ribonucleoside 5'-phosphate + diphosphate + H(+). It catalyses the reaction a 2'-deoxyribonucleoside 5'-triphosphate + H2O = a 2'-deoxyribonucleoside 5'-phosphate + diphosphate + H(+). In terms of biological role, nucleoside triphosphate pyrophosphatase. May have a dual role in cell division arrest and in preventing the incorporation of modified nucleotides into cellular nucleic acids. This chain is Nucleoside triphosphate pyrophosphatase, found in Prochlorococcus marinus (strain NATL2A).